The following is a 140-amino-acid chain: MSTIRCDIVSAEQEIFRGEATLVVATGELGELGIAPKHAPLITRLKPGKVVVTTPNGEQLDFAISGGILEVQPQVVTVLADTAIRAQDIDEASVRKAKEEAERILANRGEAMEVAEAQQKLAEAVVQLQALERLRKTLKH.

The protein belongs to the ATPase epsilon chain family. As to quaternary structure, F-type ATPases have 2 components, CF(1) - the catalytic core - and CF(0) - the membrane proton channel. CF(1) has five subunits: alpha(3), beta(3), gamma(1), delta(1), epsilon(1). CF(0) has three main subunits: a, b and c.

The protein resides in the cell inner membrane. Functionally, produces ATP from ADP in the presence of a proton gradient across the membrane. This Stenotrophomonas maltophilia (strain R551-3) protein is ATP synthase epsilon chain.